A 1184-amino-acid chain; its full sequence is DNA-directed RNA polymerase subunit beta (1184 aa).

This sequence belongs to the RNA polymerase beta chain family. As to quaternary structure, the RNAP catalytic core consists of 2 alpha, 1 beta, 1 beta' and 1 omega subunit. When a sigma factor is associated with the core the holoenzyme is formed, which can initiate transcription.

The catalysed reaction is RNA(n) + a ribonucleoside 5'-triphosphate = RNA(n+1) + diphosphate. DNA-dependent RNA polymerase catalyzes the transcription of DNA into RNA using the four ribonucleoside triphosphates as substrates. This chain is DNA-directed RNA polymerase subunit beta, found in Fusobacterium nucleatum subsp. nucleatum (strain ATCC 25586 / DSM 15643 / BCRC 10681 / CIP 101130 / JCM 8532 / KCTC 2640 / LMG 13131 / VPI 4355).